A 237-amino-acid chain; its full sequence is Probable Bax inhibitor 1 (237 aa).

At 1-29 (MNVFDRNINFDSLFKFSQISHSTQVHLKN) the chain is on the cytoplasmic side. The helical transmembrane segment at 30–50 (VYSSLAVCMFVAAAGSYVHVV) threads the bilayer. Over 51–52 (TR) the chain is Lumenal. Residues 53–73 (LFQGGMLSVLGSLGMMFWLAM) form a helical membrane-spanning segment. Residues 74-86 (TPHNSETEKKRLA) are Cytoplasmic-facing. The helical transmembrane segment at 87 to 107 (ILAGFAFLTGVGLCPTLDFVI) threads the bilayer. The Lumenal segment spans residues 108–112 (AINPS). A helical membrane pass occupies residues 113–133 (IIVTAFLGTSVIFVCFTLSAL). The Cytoplasmic portion of the chain corresponds to 134-139 (YAKRRS). The helical transmembrane segment at 140 to 160 (YLFLGGTLMSGLSILFLMSMM) threads the bilayer. Residues 161-166 (NMFFGS) are Lumenal-facing. The helical transmembrane segment at 167–187 (VMLFKAHMYLGLLIMCGFVLX) threads the bilayer. The Cytoplasmic segment spans residues 188–206 (DTQLIIEKAENGDKDYVWH). Residues 207-227 (SVDLFLDFITIFRKLMVILAL) constitute an intramembrane region (helical). The Cytoplasmic segment spans residues 228 to 237 (NDKDKKKEKK).

This sequence belongs to the BI1 family. As to expression, highly abundant in testis.

It localises to the endoplasmic reticulum membrane. In terms of biological role, suppressor of apoptosis. Modulates unfolded protein response signaling. Modulate ER calcium homeostasis by acting as a calcium-leak channel. The protein is Probable Bax inhibitor 1 (tmbim6) of Paralichthys olivaceus (Bastard halibut).